Consider the following 505-residue polypeptide: MVNKDVKQTTAFGAPVWDDNNVITAGPRGPVLLQSTWFLEKLAAFDRERIPERVVHAKGSGAYGTFTVTKDITKYTKAKIFSKVGKKTECFFRFSTVAGEKGSADAVRDPRGFAMKYYTEEGNWDLVGNNTPVFFIRDAIKFPDFIHTQKRDPQTNLPNPDMVWDFWSNVPESLYQVTWVMSDRGIPKSFRHMDGFGSHTFSLINAKGERFWVKFHFETMQGVKHLTNEEAAEVRKYDPDSNQRDLFDAIAGGDFPKWKMSIQVMPEEDAKKYRFHPFDVTKIWYLQDYPLMEVGIVELNKNPENYFAEVEQAAFTPANVVPGIGYSPDRMLQGRLFSYGDTHRYRLGVNYPQIPVNRPRCPFHSSSRDGYMQNGYYGSLQNYTPSSLPGYKEDKSARDPKFNLAHIEKEFEVWNWDYRAEDSDYYTQPGDYYRSLPADEKERLYDTIGGSLAHVTHKEIVDKQLEHFKKADPKYAEGVKKALEKHQKMMKDMHAKDMHHMKKKK.

Residues H56 and N129 contribute to the active site. Position 339 (Y339) interacts with heme.

It belongs to the catalase family. Heme serves as cofactor.

It is found in the cytoplasm. It carries out the reaction 2 H2O2 = O2 + 2 H2O. Its function is as follows. Decomposes hydrogen peroxide into water and oxygen; serves to protect cells from the toxic effects of hydrogen peroxide. The chain is Catalase (katA) from Helicobacter pylori (strain J99 / ATCC 700824) (Campylobacter pylori J99).